The following is a 187-amino-acid chain: Small ribosomal subunit protein uS7 (187 aa).

The protein belongs to the universal ribosomal protein uS7 family. As to quaternary structure, part of the 30S ribosomal subunit.

Its function is as follows. One of the primary rRNA binding proteins, it binds directly to 16S rRNA where it nucleates assembly of the head domain of the 30S subunit. Is located at the subunit interface close to the decoding center. The protein is Small ribosomal subunit protein uS7 of Methanosphaera stadtmanae (strain ATCC 43021 / DSM 3091 / JCM 11832 / MCB-3).